A 214-amino-acid polypeptide reads, in one-letter code: Octanoyltransferase (214 aa).

Residues glycine 28–alanine 210 form the BPL/LPL catalytic domain. Substrate-binding positions include arginine 73–histidine 80, serine 140–glycine 142, and glycine 153–serine 155. The Acyl-thioester intermediate role is filled by cysteine 171.

It belongs to the LipB family.

Its subcellular location is the cytoplasm. It catalyses the reaction octanoyl-[ACP] + L-lysyl-[protein] = N(6)-octanoyl-L-lysyl-[protein] + holo-[ACP] + H(+). Its pathway is protein modification; protein lipoylation via endogenous pathway; protein N(6)-(lipoyl)lysine from octanoyl-[acyl-carrier-protein]: step 1/2. Its function is as follows. Catalyzes the transfer of endogenously produced octanoic acid from octanoyl-acyl-carrier-protein onto the lipoyl domains of lipoate-dependent enzymes. Lipoyl-ACP can also act as a substrate although octanoyl-ACP is likely to be the physiological substrate. This is Octanoyltransferase from Maridesulfovibrio salexigens (strain ATCC 14822 / DSM 2638 / NCIMB 8403 / VKM B-1763) (Desulfovibrio salexigens).